The primary structure comprises 289 residues: Formamidopyrimidine-DNA glycosylase (289 aa).

Proline 2 acts as the Schiff-base intermediate with DNA in catalysis. Glutamate 3 serves as the catalytic Proton donor. Lysine 61 functions as the Proton donor; for beta-elimination activity in the catalytic mechanism. DNA-binding residues include histidine 97, arginine 119, and lysine 168. Residues 254-288 (NAYGRAGKPCPRCGEPIVRVQWTNRSSHFCPQCQS) form an FPG-type zinc finger. Arginine 278 functions as the Proton donor; for delta-elimination activity in the catalytic mechanism.

Belongs to the FPG family. As to quaternary structure, monomer. Zn(2+) is required as a cofactor.

It catalyses the reaction Hydrolysis of DNA containing ring-opened 7-methylguanine residues, releasing 2,6-diamino-4-hydroxy-5-(N-methyl)formamidopyrimidine.. The enzyme catalyses 2'-deoxyribonucleotide-(2'-deoxyribose 5'-phosphate)-2'-deoxyribonucleotide-DNA = a 3'-end 2'-deoxyribonucleotide-(2,3-dehydro-2,3-deoxyribose 5'-phosphate)-DNA + a 5'-end 5'-phospho-2'-deoxyribonucleoside-DNA + H(+). In terms of biological role, involved in base excision repair of DNA damaged by oxidation or by mutagenic agents. Acts as a DNA glycosylase that recognizes and removes damaged bases. Has a preference for oxidized purines, such as 7,8-dihydro-8-oxoguanine (8-oxoG). Has AP (apurinic/apyrimidinic) lyase activity and introduces nicks in the DNA strand. Cleaves the DNA backbone by beta-delta elimination to generate a single-strand break at the site of the removed base with both 3'- and 5'-phosphates. This Corynebacterium urealyticum (strain ATCC 43042 / DSM 7109) protein is Formamidopyrimidine-DNA glycosylase.